Consider the following 37-residue polypeptide: NADH dehydrogenase [ubiquinone] 1 alpha subcomplex subunit 5 (37 aa).

It belongs to the complex I NDUFA5 subunit family. As to quaternary structure, complex I is composed of about 45 different subunits.

It localises to the mitochondrion inner membrane. Functionally, accessory subunit of the mitochondrial membrane respiratory chain NADH dehydrogenase (Complex I), that is believed not to be involved in catalysis. Complex I functions in the transfer of electrons from NADH to the respiratory chain. The immediate electron acceptor for the enzyme is believed to be ubiquinone. The chain is NADH dehydrogenase [ubiquinone] 1 alpha subcomplex subunit 5 from Solanum tuberosum (Potato).